We begin with the raw amino-acid sequence, 465 residues long: RuvB-like helicase 2 (465 aa).

Residue 72-79 coordinates ATP; the sequence is GPPSTGKT.

It belongs to the RuvB family. In terms of assembly, may form heterododecamers with RVB1. Component of the SWR1 chromatin remodeling complex, the INO80 chromatin remodeling complex, and of the R2TP complex. Interacts with dil1.

Its subcellular location is the nucleus. The catalysed reaction is ATP + H2O = ADP + phosphate + H(+). Functionally, DNA helicase which participates in several chromatin remodeling complexes, including the SWR1 and the INO80 complexes. The SWR1 complex mediates the ATP-dependent exchange of histone H2A for the H2A variant HZT1 leading to transcriptional regulation of selected genes by chromatin remodeling. The INO80 complex remodels chromatin by shifting nucleosomes and is involved in DNA repair. Also involved in pre-rRNA processing. The polypeptide is RuvB-like helicase 2 (rvb2) (Schizosaccharomyces pombe (strain 972 / ATCC 24843) (Fission yeast)).